We begin with the raw amino-acid sequence, 279 residues long: Movement protein (279 aa).

The tract at residues 247–279 (ESEELNVESPPAAIGSSSASRSEAFRPQVVNGL) is disordered. Low complexity predominate over residues 254–268 (ESPPAAIGSSSASRS).

This sequence belongs to the cucumovirus movement protein family.

Its subcellular location is the host cell junction. The protein localises to the host plasmodesma. Transports viral genome to neighboring plant cells directly through plasmosdesmata, without any budding. The movement protein allows efficient cell to cell propagation, by bypassing the host cell wall barrier. Acts by forming a tubular structure at the host plasmodesmata, enlarging it enough to allow free passage of virion capsids. The sequence is that of Movement protein from Cucumis sativus (Cucumber).